A 323-amino-acid polypeptide reads, in one-letter code: CYFIP-related Rac1 interactor A (323 aa).

This sequence belongs to the CYRI family.

It localises to the membrane. May negatively regulate RAC1 signaling and RAC1-driven cytoskeletal remodeling. May regulate chemotaxis, cell migration and epithelial polarization by controlling the polarity, plasticity, duration and extent of protrusions. The sequence is that of CYFIP-related Rac1 interactor A (CYRIA) from Gallus gallus (Chicken).